The chain runs to 257 residues: Acetylglutamate kinase (257 aa).

Substrate contacts are provided by residues 41–42, Arg63, and Asn155; that span reads GG.

Belongs to the acetylglutamate kinase family. ArgB subfamily.

It localises to the cytoplasm. It catalyses the reaction N-acetyl-L-glutamate + ATP = N-acetyl-L-glutamyl 5-phosphate + ADP. It participates in amino-acid biosynthesis; L-arginine biosynthesis; N(2)-acetyl-L-ornithine from L-glutamate: step 2/4. In terms of biological role, catalyzes the ATP-dependent phosphorylation of N-acetyl-L-glutamate. The protein is Acetylglutamate kinase of Solibacter usitatus (strain Ellin6076).